A 238-amino-acid polypeptide reads, in one-letter code: 1-(5-phosphoribosyl)-5-[(5-phosphoribosylamino)methylideneamino] imidazole-4-carboxamide isomerase (238 aa).

The active-site Proton acceptor is the Asp8. Asp129 (proton donor) is an active-site residue.

This sequence belongs to the HisA/HisF family.

The protein resides in the cytoplasm. The enzyme catalyses 1-(5-phospho-beta-D-ribosyl)-5-[(5-phospho-beta-D-ribosylamino)methylideneamino]imidazole-4-carboxamide = 5-[(5-phospho-1-deoxy-D-ribulos-1-ylimino)methylamino]-1-(5-phospho-beta-D-ribosyl)imidazole-4-carboxamide. It participates in amino-acid biosynthesis; L-histidine biosynthesis; L-histidine from 5-phospho-alpha-D-ribose 1-diphosphate: step 4/9. This is 1-(5-phosphoribosyl)-5-[(5-phosphoribosylamino)methylideneamino] imidazole-4-carboxamide isomerase from Anaeromyxobacter sp. (strain Fw109-5).